The following is a 269-amino-acid chain: UPF0761 membrane protein NTHI0384 (269 aa).

Transmembrane regions (helical) follow at residues 32–52 (MLAI…FPVF), 89–109 (MSAV…NNID), 128–148 (FAIY…SIGI), 168–188 (LLSF…YTVV), 203–223 (FLAA…VVTF), and 232–252 (AMAT…VVLV).

It belongs to the UPF0761 family.

Its subcellular location is the cell inner membrane. The polypeptide is UPF0761 membrane protein NTHI0384 (Haemophilus influenzae (strain 86-028NP)).